The sequence spans 281 residues: 2,3,4,5-tetrahydropyridine-2,6-dicarboxylate N-succinyltransferase (281 aa).

Positions 108 and 145 each coordinate substrate.

Belongs to the transferase hexapeptide repeat family. As to quaternary structure, homotrimer.

It is found in the cytoplasm. The enzyme catalyses (S)-2,3,4,5-tetrahydrodipicolinate + succinyl-CoA + H2O = (S)-2-succinylamino-6-oxoheptanedioate + CoA. It participates in amino-acid biosynthesis; L-lysine biosynthesis via DAP pathway; LL-2,6-diaminopimelate from (S)-tetrahydrodipicolinate (succinylase route): step 1/3. The sequence is that of 2,3,4,5-tetrahydropyridine-2,6-dicarboxylate N-succinyltransferase from Rhodopseudomonas palustris (strain ATCC BAA-98 / CGA009).